We begin with the raw amino-acid sequence, 457 residues long: MEPRPLLLLLGLCSAGLVLGSEHETRLVAKLFEDYNSVVRPVEDHRQAVEVTVGLQLIQLINVDEVNQIVTTNVRLKQQWVDYNLKWNPDDYGGVKKIHIPSEKIWRPDLVLYNNADGDFAIVKFTKVLLDYTGHITWTPPAIFKSYCEIIVTHFPFDEQNCSMKLGTWTYDGSVVVINPESDQPDLSNFMESGEWVIKESRGWKHWVFYACCPSTPYLDITYHFVMQRLPLYFIVNVIIPCLLFSFLTGLVFYLPTDSGEKMTLSISVLLSLTVFLLVIVELIPSTSSAVPLIGKYMLFTMVFVIASIIITVIVINTHHRSPSTHVMPEWVRKVFIDTIPNIMFFSTMKRPSREKQDKKIFTEDIDISDISGKPGPPPMGFHSPLIKHPEVKSAIEGIKYIAETMKSDQESNNAAEEWKYVAMVMDHILLAVFMLVCIIGTLAVFAGRLIELNQQG.

An N-terminal signal peptide occupies residues 1-20 (MEPRPLLLLLGLCSAGLVLG). The Extracellular segment spans residues 21–230 (SEHETRLVAK…ITYHFVMQRL (210 aa)). Cystine bridges form between Cys148/Cys162 and Cys212/Cys213. N-linked (GlcNAc...) asparagine glycosylation is present at Asn161. 3 consecutive transmembrane segments (helical) span residues 231–255 (PLYF…VFYL), 263–281 (MTLS…LVIV), and 297–316 (YMLF…VIVI). The Cytoplasmic segment spans residues 317 to 428 (NTHHRSPSTH…WKYVAMVMDH (112 aa)). Residues 429 to 447 (ILLAVFMLVCIIGTLAVFA) traverse the membrane as a helical segment.

Belongs to the ligand-gated ion channel (TC 1.A.9) family. Acetylcholine receptor (TC 1.A.9.1) subfamily. Alpha-1/CHRNA1 sub-subfamily. As to quaternary structure, one of the alpha chains that assemble within the acetylcholine receptor, a pentamer of two alpha chains, a beta, a delta, and a gamma (in immature muscle) or epsilon (in mature muscle) chains. The muscle heteropentamer composed of alpha-1, beta-1, delta, epsilon subunits interacts with the alpha-conotoxin ImII.

The protein localises to the postsynaptic cell membrane. Its subcellular location is the cell membrane. The enzyme catalyses K(+)(in) = K(+)(out). It catalyses the reaction Na(+)(in) = Na(+)(out). Upon acetylcholine binding, the AChR responds by an extensive change in conformation that affects all subunits and leads to opening of an ion-conducting channel across the plasma membrane. In Bos taurus (Bovine), this protein is Acetylcholine receptor subunit alpha (CHRNA1).